A 491-amino-acid chain; its full sequence is Protein nucleotidyltransferase YdiU (491 aa).

ATP-binding residues include Gly94, Gly96, Arg97, Lys117, Asp129, Gly130, Arg180, and Arg187. Catalysis depends on Asp256, which acts as the Proton acceptor. The Mg(2+) site is built by Asn257 and Asp266. Asp266 is an ATP binding site.

It belongs to the SELO family. Mg(2+) is required as a cofactor. Requires Mn(2+) as cofactor.

It carries out the reaction L-seryl-[protein] + ATP = 3-O-(5'-adenylyl)-L-seryl-[protein] + diphosphate. It catalyses the reaction L-threonyl-[protein] + ATP = 3-O-(5'-adenylyl)-L-threonyl-[protein] + diphosphate. The catalysed reaction is L-tyrosyl-[protein] + ATP = O-(5'-adenylyl)-L-tyrosyl-[protein] + diphosphate. The enzyme catalyses L-histidyl-[protein] + UTP = N(tele)-(5'-uridylyl)-L-histidyl-[protein] + diphosphate. It carries out the reaction L-seryl-[protein] + UTP = O-(5'-uridylyl)-L-seryl-[protein] + diphosphate. It catalyses the reaction L-tyrosyl-[protein] + UTP = O-(5'-uridylyl)-L-tyrosyl-[protein] + diphosphate. Functionally, nucleotidyltransferase involved in the post-translational modification of proteins. It can catalyze the addition of adenosine monophosphate (AMP) or uridine monophosphate (UMP) to a protein, resulting in modifications known as AMPylation and UMPylation. This is Protein nucleotidyltransferase YdiU from Clostridium botulinum (strain 657 / Type Ba4).